We begin with the raw amino-acid sequence, 1214 residues long: Neuronal cell adhesion molecule (1214 aa).

The N-terminal stretch at 1 to 29 (MQLKTMPKKKPLSAGRAPLFLFLCQMISA) is a signal peptide. Over 30–1077 (LDVPLDPKLL…ASRQVDIATQ (1048 aa)) the chain is Extracellular. 2 consecutive Ig-like C2-type domains span residues 46-134 (PTIT…AAVS) and 141-235 (PSRS…QPIS). Intrachain disulfides connect cysteine 68-cysteine 123 and cysteine 167-cysteine 218. Asparagine 83 is a glycosylation site (N-linked (GlcNAc...) asparagine). N-linked (GlcNAc...) asparagine glycosylation is found at asparagine 223, asparagine 245, asparagine 251, asparagine 276, asparagine 314, and asparagine 377. 4 consecutive Ig-like C2-type domains span residues 267–356 (PPTF…ISVT), 361–448 (PYWI…AFVN), 454–541 (PRIL…VHLE), and 545–626 (PTRF…DSVS). Cysteines 292 and 340 form a disulfide. A disulfide bridge connects residues cysteine 382 and cysteine 432. Residues asparagine 433 and asparagine 507 are each glycosylated (N-linked (GlcNAc...) asparagine). 2 disulfide bridges follow: cysteine 476-cysteine 525 and cysteine 567-cysteine 616. 7 N-linked (GlcNAc...) asparagine glycosylation sites follow: asparagine 619, asparagine 716, asparagine 802, asparagine 858, asparagine 993, asparagine 1009, and asparagine 1019. 4 consecutive Fibronectin type-III domains span residues 649 to 744 (PPFD…TKAA), 746 to 843 (PDQN…SGED), 848 to 950 (APGN…TPEG), and 954 to 1051 (APSS…VDEG). Residues 1078-1100 (GWFIGLMCAVALLILILLIVCFI) form a helical membrane-spanning segment. Residues 1101 to 1214 (RRNKGGKYPV…SPVNAMNSFV (114 aa)) are Cytoplasmic-facing. The span at 1109–1129 (PVKEKEDAHADPEIQPMKEDD) shows a compositional bias: basic and acidic residues. The tract at residues 1109 to 1214 (PVKEKEDAHA…SPVNAMNSFV (106 aa)) is disordered. Phosphothreonine is present on threonine 1131. Tyrosine 1135 bears the Phosphotyrosine mark. Position 1136 is a phosphoserine (serine 1136). Basic and acidic residues predominate over residues 1151–1160 (PSDRTVKKED). A phosphoserine mark is found at serine 1161, serine 1164, serine 1181, serine 1200, serine 1201, and serine 1205. Residues 1198-1214 (NESSEAPSPVNAMNSFV) show a composition bias toward polar residues.

Belongs to the immunoglobulin superfamily. L1/neurofascin/NgCAM family. As to quaternary structure, constituent of a NFASC/NRCAM/ankyrin-G complex. Detected in a complex with CNTN1 and PTPRB. Interacts with MYOC. Interacts with GLDN. As to expression, detected in cerebellum Purkinje cells. Detected on nodes of Ranvier and unmyelinated axons in sciatic nerve (at protein level).

It is found in the cell membrane. The protein localises to the cell projection. It localises to the axon. The protein resides in the secreted. Its function is as follows. Cell adhesion protein that is required for normal responses to cell-cell contacts in brain and in the peripheral nervous system. Plays a role in neurite outgrowth in response to contactin binding. Plays a role in mediating cell-cell contacts between Schwann cells and axons. Plays a role in the formation and maintenance of the nodes of Ranvier on myelinated axons. Nodes of Ranvier contain clustered sodium channels that are crucial for the saltatory propagation of action potentials along myelinated axons. During development, nodes of Ranvier are formed by the fusion of two heminodes. Required for normal clustering of sodium channels at heminodes; not required for the formation of mature nodes with normal sodium channel clusters. Required, together with GLDN, for maintaining NFASC and sodium channel clusters at mature nodes of Ranvier. In Rattus norvegicus (Rat), this protein is Neuronal cell adhesion molecule (Nrcam).